A 184-amino-acid polypeptide reads, in one-letter code: Endothelial cell-specific molecule 1 (184 aa).

The signal sequence occupies residues 1 to 21 (MKSLLLLTTLLIPLHLGMAWS). Residues 24–102 (YAVDCPEHCD…GDEFGVCKDC (79 aa)) enclose the IGFBP N-terminal domain. Disulfide bonds link C28/C51, C32/C53, C37/C54, C43/C57, C65/C83, and C77/C99. A disordered region spans residues 145 to 184 (RTSASQTERDAASGDGNAVREEIGDRNAARPSVMKWLNPR). Positions 151–172 (TERDAASGDGNAVREEIGDRNA) are enriched in basic and acidic residues. S157 is a glycosylation site (O-linked (Xyl...) (chondroitin sulfate) serine).

O-glycosylated; contains chondroitin sulfate and dermatan sulfate. In terms of tissue distribution, pineal gland specific.

It localises to the secreted. Involved in angiogenesis; promotes angiogenic sprouting. May have potent implications in lung endothelial cell-leukocyte interactions. This is Endothelial cell-specific molecule 1 (Esm1) from Rattus norvegicus (Rat).